The primary structure comprises 141 residues: MTDQRWLIDKSALVRLTDSPDMEIWSNRIERGLVHITGVTRLEVGFSAECGEIARREFREPPLSAMPVEYLTPRIEDRALEVQTLLADRGHHRGPSIPDLLIAATAELSGLTVLHVDKDFDAIAALTGQKTERLTHRPPSA.

A PINc domain is found at 7–129; that stretch reads LIDKSALVRL…FDAIAALTGQ (123 aa). The Mg(2+) site is built by aspartate 99, aspartate 117, and aspartate 119.

It belongs to the PINc/VapC protein family. As to quaternary structure, probably active as a homodimer. Mg(2+) serves as cofactor.

In terms of biological role, toxic component of a type II toxin-antitoxin (TA) system. Acts as an RNase. All its toxic effects are neutralized by coexpression with cognate antitoxin VapB2. The protein is Ribonuclease VapC2 of Mycobacterium tuberculosis (strain CDC 1551 / Oshkosh).